The following is a 237-amino-acid chain: Class B acid phosphatase (237 aa).

The first 23 residues, 1–23, serve as a signal peptide directing secretion; the sequence is MKKITLALSAVCLLFTLNHSANA. Catalysis depends on Asp69, which acts as the Nucleophile. The Mg(2+) site is built by Asp69 and Asp71. Residue Asp71 is the Proton donor of the active site. Substrate is bound by residues 137–138 and Lys177; that span reads TG. Position 192 (Asp192) interacts with Mg(2+).

Belongs to the class B bacterial acid phosphatase family. Homotetramer. The cofactor is Mg(2+).

It localises to the periplasm. It carries out the reaction a phosphate monoester + H2O = an alcohol + phosphate. Dephosphorylates several organic phosphate monoesters. Also has a phosphotransferase activity catalyzing the transfer of low-energy phosphate groups from organic phosphate monoesters to free hydroxyl groups of various organic compounds. The sequence is that of Class B acid phosphatase from Salmonella arizonae (strain ATCC BAA-731 / CDC346-86 / RSK2980).